The chain runs to 375 residues: Aminomethyltransferase (375 aa).

Belongs to the GcvT family. In terms of assembly, the glycine cleavage system is composed of four proteins: P, T, L and H.

The enzyme catalyses N(6)-[(R)-S(8)-aminomethyldihydrolipoyl]-L-lysyl-[protein] + (6S)-5,6,7,8-tetrahydrofolate = N(6)-[(R)-dihydrolipoyl]-L-lysyl-[protein] + (6R)-5,10-methylene-5,6,7,8-tetrahydrofolate + NH4(+). Functionally, the glycine cleavage system catalyzes the degradation of glycine. This chain is Aminomethyltransferase, found in Cupriavidus metallidurans (strain ATCC 43123 / DSM 2839 / NBRC 102507 / CH34) (Ralstonia metallidurans).